The following is a 336-amino-acid chain: Polyadenylate-binding protein-interacting protein 12 (336 aa).

The segment at 14-47 (EAGGLISPSPPSSVTSQESGASSNNDHGGNGIHD) is disordered. The span at 25 to 40 (SSVTSQESGASSNNDH) shows a compositional bias: polar residues. Positions 75–85 (KLNPMAKEFIP) match the PAM2-like motif. The Bipartite nuclear localization signal signature appears at 122-134 (RRKKSFGQQGKRR). 2 RRM domains span residues 150-225 (RTVY…PSKT) and 247-323 (RTIY…PSKT).

Interacts with MPC. In terms of tissue distribution, expressed in roots, leaves, stems, flowers and siliques. Detected in flowers only in growing organs: gynoecium, petals, stamenal filaments, anther walls and ovules.

It localises to the nucleus. Its function is as follows. Binds nucleotic acids in vitro. The polypeptide is Polyadenylate-binding protein-interacting protein 12 (CID12) (Arabidopsis thaliana (Mouse-ear cress)).